Consider the following 248-residue polypeptide: Probable phosphatase VS_II0429 (248 aa).

9 residues coordinate Zn(2+): H8, H10, H16, H41, E74, H102, H132, D194, and H196.

Belongs to the PHP family. Requires Zn(2+) as cofactor.

In Vibrio atlanticus (strain LGP32) (Vibrio splendidus (strain Mel32)), this protein is Probable phosphatase VS_II0429.